Reading from the N-terminus, the 477-residue chain is P3 protein (477 aa).

The interval 1–21 is disordered; the sequence is MVFRSGEGHSLQWPGPEGGTG. A run of 8 helical transmembrane segments spans residues 225–245, 253–273, 281–301, 320–340, 361–381, 383–403, 417–437, and 450–470; these read PMLL…FLMA, ALAL…SYLF, VTLA…FLPL, VSKI…GVVI, VLLL…LAGV, LPIV…GYGL, VSIE…QLSL, and FLVA…HFIY.

The protein belongs to the bile acid:sodium symporter (BASS) (TC 2.A.28) family.

Its subcellular location is the membrane. Its function is as follows. The ubiquitous expression and the conservation of the sequence in distant animal species suggest that the gene codes for a protein with housekeeping functions. In Bos taurus (Bovine), this protein is P3 protein (SLC10A3).